The primary structure comprises 495 residues: Anaerobic nitric oxide reductase flavorubredoxin (495 aa).

The tract at residues 30–210 is zinc metallo-hydrolase; that stretch reads HKGTSYNSYL…PFSPLVTAKI (181 aa). Fe cation-binding residues include histidine 79, glutamate 81, aspartate 83, histidine 147, aspartate 166, and histidine 227. The Flavodoxin-like domain maps to 254 to 393; that stretch reads ITLFYDSMSN…ECREHGRQLA (140 aa). Residues 260–264 and 342–369 each bind FMN; these read SMSNN and AFGS…DISI. The Rubredoxin-like domain maps to 438–489; sequence DQAMLCTVCQWVYDPAQGEPDQLVAPGTPWAQVPDSFLCPGCGIGKEVFEPC. Cysteine 443, cysteine 446, cysteine 476, and cysteine 479 together coordinate Fe cation.

This sequence in the N-terminal section; belongs to the zinc metallo-hydrolase group 3 family. Homotetramer. Requires Fe cation as cofactor. FMN is required as a cofactor.

The protein resides in the cytoplasm. It functions in the pathway nitrogen metabolism; nitric oxide reduction. Anaerobic nitric oxide reductase; uses NADH to detoxify nitric oxide (NO), protecting several 4Fe-4S NO-sensitive enzymes. Has at least 2 reductase partners, only one of which (NorW, flavorubredoxin reductase) has been identified. NO probably binds to the di-iron center; electrons enter from the NorW at rubredoxin and are transferred sequentially to the FMN center and the di-iron center. Also able to function as an aerobic oxygen reductase. This is Anaerobic nitric oxide reductase flavorubredoxin from Aeromonas hydrophila subsp. hydrophila (strain ATCC 7966 / DSM 30187 / BCRC 13018 / CCUG 14551 / JCM 1027 / KCTC 2358 / NCIMB 9240 / NCTC 8049).